Consider the following 7354-residue polypeptide: Microtubule-actin cross-linking factor 1, isoforms 1/2/3/4 (7354 aa).

The tract at residues 1 to 47 is disordered; the sequence is MSSSDEETLSERSCRSERSCRSERSYRSERSGSLSPCPPGDTLPWNL. The tract at residues 1 to 295 is actin-binding; the sequence is MSSSDEETLS…VITYVSSIYD (295 aa). The residue at position 4 (Ser4) is a Phosphoserine. Basic and acidic residues predominate over residues 9 to 30; it reads LSERSCRSERSCRSERSYRSER. Residue Ser35 is modified to Phosphoserine. Phosphothreonine is present on Thr42. A Phosphoserine modification is found at Ser57. Calponin-homology (CH) domains follow at residues 78-181 and 194-298; these read RVQK…LHFQ and MSAK…DAFP. The LRR 1 repeat unit spans residues 148 to 171; the sequence is QRQVKLVNIRNDDITDGNPKLTLG. Ser280 is modified (phosphoserine). 2 LRR repeats span residues 377–399 and 441–464; these read LYKL…YHPN and LNCE…LESG. One can recognise an SH3 domain in the interval 868–925; sequence KSTLSVKAICDYRQIEITICKNDECVLEDNSQRTKWKVISPTGNEAMVPSVCFLIPPP. An LRR 5 repeat occupies 1050–1073; that stretch reads ISELKNIRLLLEECEQRLLKQIQS. Position 1122 is a phosphoserine (Ser1122). LRR repeat units lie at residues 1128–1154, 1187–1210, and 1257–1282; these read ATTL…VYLN, PADL…VKDK, and HRVI…DYRA. Residues Ser1367 and Ser1376 each carry the phosphoserine modification. Plectin repeat units follow at residues 1577 to 1619, 1654 to 1696, 1769 to 1809, 1811 to 1848, and 1855 to 1885; these read LVLL…QLLG, LKVL…ELQS, RLLE…CAIL, RQLQ…VILE, and GLLL…HKIL. 3 positions are modified to phosphoserine: Ser2051, Ser2077, and Ser2081. 2 stretches are compositionally biased toward basic and acidic residues: residues 2120–2131 and 2145–2155; these read KEEQAETLREEN and SEGKDLSTEKS. The tract at residues 2120-2155 is disordered; sequence KEEQAETLREENISGDPLLVECPEESEGKDLSTEKS. 5 Plectin repeats span residues 2276–2316, 2352–2393, 2394–2425, 2487–2528, and 2671–2715; these read STLS…VKLM, NVLM…RILE, GQVI…DTAD, LLTK…LRKV, and LKVL…ASHQ. Disordered stretches follow at residues 2806–2841, 2951–2978, and 3058–3099; these read AGIR…DSKV, EMGG…EVTI, and SQET…HISK. Residues 2812–2837 are compositionally biased toward basic and acidic residues; it reads NGEKAEKGRKISVEMEGQRQDEKASS. The segment covering 2968–2978 has biased composition (acidic residues); sequence SEEESDQEVTI. A phosphoserine mark is found at Ser3082 and Ser3085. 3 LRR repeats span residues 3225–3244, 3606–3630, and 3657–3681; these read VGQR…LPTR, SGKS…IQSH, and LTAL…TRVA. 2 Spectrin repeats span residues 3845–3920 and 3962–4070; these read ELQK…NFEE and QYQQ…ALLQ. A Phosphoserine modification is found at Ser3889. One copy of the LRR 12 repeat lies at 3898-3920; it reads KGDLRFVTISGQKVLETENNFEE. LRR repeat units follow at residues 4087–4112 and 4223–4249; these read LQSI…VIQE and IQEL…TLGS. Residues 4428–4536 form a Spectrin 3 repeat; the sequence is RMEEVQKEAS…TVARQKQLEE (109 aa). Phosphoserine occurs at positions 4458 and 4483. 3 LRR repeats span residues 4473–4496, 4563–4583, and 4728–4751; these read KAFL…LAGL, GVLG…QFML, and KKRL…RMNR. Residues 4759–4863 form a Spectrin 4 repeat; the sequence is TQQFQQMFDE…KTANRQSRLK (105 aa). Ser4921 carries the post-translational modification Phosphoserine. 3 LRR repeats span residues 5010–5035, 5131–5153, and 5240–5263; these read NKNL…YLRN, NKIQ…MLEE, and KDQV…LIQS. Spectrin repeat units follow at residues 5195–5300, 5307–5409, 5414–5506, 5631–5735, 5742–5844, 5961–6066, 6071–6175, 6181–6284, 6289–6395, 6400–6503, 6508–6614, 6621–6722, and 6726–6830; these read EDFY…QLQE, KFQD…QLED, AKQF…ADIT, RSQQ…ARLE, NQFW…ALDE, LAEK…KLED, AVQY…HKLE, LGQF…QQLQ, QAQG…KLEE, ATEF…RSLD, RAKQ…KLEE, QFMD…RLEQ, and QAEE…QRLE. Thr5394 is modified (phosphothreonine). LRR repeat units follow at residues 5654 to 5678 and 5763 to 5787; these read MALG…AFSI and AQLP…QLRE. Ser5988 carries the phosphoserine modification. At Lys6166 the chain carries N6-acetyllysine. The LRR 23 repeat unit spans residues 6452 to 6475; the sequence is RDQIIELDQTGNQLKFLSQKQDVV. The tract at residues 6904–6937 is disordered; that stretch reads SVEPTHAPFMEKSRSGSRKSLNQPTPPPMPILSQ. Residue Ser6923 is modified to Phosphoserine. EF-hand domains are found at residues 7001 to 7036 and 7037 to 7072; these read HKKS…SKFP and TTKL…NKDA. Ca(2+) is bound by residues Asp7014, Asp7016, Asp7018, Lys7020, Glu7025, Asp7050, Asp7052, Asp7054, Tyr7056, and Glu7061. The GAR domain maps to 7077–7155; it reads TDADKIEDEV…EFLVKNDPCR (79 aa). The tract at residues 7077–7354 is C-terminal tail; that stretch reads TDADKIEDEV…ASPRTPGPKR (278 aa). Residues 7171–7354 form a disordered region; the sequence is PEGASQGMTP…ASPRTPGPKR (184 aa). Residues 7191 to 7225 show a composition bias toward low complexity; that stretch reads SSRAASPTRSSSSASQSNHSCTSMPSSPATPASGT. Residue Thr7220 is modified to Phosphothreonine. Over residues 7242 to 7261 the composition is skewed to polar residues; the sequence is FHSSRTSLAGDTSNSSSPAS. A phosphoserine mark is found at Ser7245 and Ser7258. Residues 7276 to 7290 are compositionally biased toward low complexity; the sequence is SRPGSRAGSRAGSRA. Positions 7279 to 7294 are 4 X 4 AA tandem repeats of [GS]-S-R-[AR]; it reads GSRAGSRAGSRASSRR. Ser7296 and Ser7299 each carry phosphoserine. The span at 7305–7315 shows a compositional bias: polar residues; it reads ETQSACSDTSE. Residues 7316–7327 are compositionally biased toward low complexity; it reads SSAAGGQGSSRR.

Belongs to the plakin or cytolinker family. As to quaternary structure, interacts with AXIN1, LRP6 and GOLGA4. Found in a complex composed of MACF1, APC, AXIN1, CTNNB1 and GSK3B. Interacts with MAPRE1, CLASP1 and CLASP2. Interacts with CAMSAP3. Phosphorylated on serine residues in the C-terminal tail by GSK3B. Phosphorylation inhibits microtubule-binding and this plays a critical role in bulge stem cell migration and skin wound repair. Wnt-signaling can repress phosphorylation. Enriched in the hair follicle stem cells (at protein level). Isoform 1 and isoform 2 are ubiquitous expressed, with higher levels seen in lung, heart, thymus, spleen and brain.

It is found in the cytoplasm. The protein localises to the cytoskeleton. It localises to the golgi apparatus. Its subcellular location is the cell membrane. The protein resides in the cell projection. It is found in the ruffle membrane. F-actin-binding protein which plays a role in cross-linking actin to other cytoskeletal proteins and also binds to microtubules. Plays an important role in ERBB2-dependent stabilization of microtubules at the cell cortex. Acts as a positive regulator of Wnt receptor signaling pathway and is involved in the translocation of AXIN1 and its associated complex (composed of APC, CTNNB1 and GSK3B) from the cytoplasm to the cell membrane. Has actin-regulated ATPase activity and is essential for controlling focal adhesions (FAs) assembly and dynamics. Interaction with CAMSAP3 at the minus ends of non-centrosomal microtubules tethers microtubules minus-ends to actin filaments, regulating focal adhesion size and cell migration. May play role in delivery of transport vesicles containing GPI-linked proteins from the trans-Golgi network through its interaction with GOLGA4. Plays a key role in wound healing and epidermal cell migration. Required for efficient upward migration of bulge cells in response to wounding and this function is primarily rooted in its ability to coordinate microtubule dynamics and polarize hair follicle stem cells. As a regulator of actin and microtubule arrangement and stabilization, it plays an essential role in neurite outgrowth, branching and spine formation during brain development. This chain is Microtubule-actin cross-linking factor 1, isoforms 1/2/3/4, found in Mus musculus (Mouse).